The following is a 242-amino-acid chain: Glutamine transport ATP-binding protein GlnQ (242 aa).

In terms of domain architecture, ABC transporter spans 2 to 236 (IYFHQVNKYY…PKEERAKVFL (235 aa)). ATP is bound at residue 34 to 41 (GPSGSGKS).

The protein belongs to the ABC transporter superfamily.

The protein localises to the cell membrane. In terms of biological role, part of the binding-protein-dependent transport system for glutamine. Probably responsible for energy coupling to the transport system. This is Glutamine transport ATP-binding protein GlnQ (glnQ) from Geobacillus stearothermophilus (Bacillus stearothermophilus).